Reading from the N-terminus, the 457-residue chain is Cysteine--tRNA ligase (457 aa).

Zn(2+) is bound at residue Cys28. The short motif at 30–40 (MTVYDYCHLGH) is the 'HIGH' region element. The Zn(2+) site is built by Cys209, His234, and Glu238. Residues 266–270 (KMSKS) carry the 'KMSKS' region motif. ATP is bound at residue Lys269.

This sequence belongs to the class-I aminoacyl-tRNA synthetase family. Monomer. It depends on Zn(2+) as a cofactor.

It localises to the cytoplasm. It catalyses the reaction tRNA(Cys) + L-cysteine + ATP = L-cysteinyl-tRNA(Cys) + AMP + diphosphate. The protein is Cysteine--tRNA ligase of Laribacter hongkongensis (strain HLHK9).